The chain runs to 367 residues: Diphthine methyltransferase homolog (367 aa).

WD repeat units follow at residues 84-124 (NFNS…KKLE), 132-173 (SLSN…SKVT), 180-220 (AHDY…NHND), and 234-274 (RCDM…QPII).

This sequence belongs to the DPH7 family.

It catalyses the reaction diphthine methyl ester-[translation elongation factor 2] + H2O = diphthine-[translation elongation factor 2] + methanol + H(+). It participates in protein modification; peptidyl-diphthamide biosynthesis. In terms of biological role, catalyzes the demethylation of diphthine methyl ester to form diphthine, an intermediate diphthamide biosynthesis, a post-translational modification of histidine which occurs in translation elongation factor 2 (efbA). The polypeptide is Diphthine methyltransferase homolog (wdr85) (Dictyostelium discoideum (Social amoeba)).